The sequence spans 406 residues: 8-amino-7-oxononanoate synthase (406 aa).

Arg-21 provides a ligand contact to substrate. Position 112–113 (112–113 (GY)) interacts with pyridoxal 5'-phosphate. His-137 is a substrate binding site. 3 residues coordinate pyridoxal 5'-phosphate: Ser-183, His-211, and Thr-239. Lys-242 carries the post-translational modification N6-(pyridoxal phosphate)lysine. Thr-358 contacts substrate.

It belongs to the class-II pyridoxal-phosphate-dependent aminotransferase family. BioF subfamily. Homodimer. Requires pyridoxal 5'-phosphate as cofactor.

The catalysed reaction is 6-carboxyhexanoyl-[ACP] + L-alanine + H(+) = (8S)-8-amino-7-oxononanoate + holo-[ACP] + CO2. Its pathway is cofactor biosynthesis; biotin biosynthesis. In terms of biological role, catalyzes the decarboxylative condensation of pimeloyl-[acyl-carrier protein] and L-alanine to produce 8-amino-7-oxononanoate (AON), [acyl-carrier protein], and carbon dioxide. This chain is 8-amino-7-oxononanoate synthase, found in Burkholderia cenocepacia (strain HI2424).